The chain runs to 124 residues: Phycocyanin PC645 alpha-3 subunit (124 aa).

R71 serves as a coordination point for (2R,3E)-phycocyanobilin. Positions 73, 81, and 97 each coordinate mesobiliverdin.

Belongs to the phycoerythrin family. Heterotetramer of 2 different alpha chains and 2 identical beta chains which form 2 alpha-beta heterodimers within the heterotetramer. Contains one phycocyanobilin chromophore and one mesobiliverdin chromophore with binding mediated by both the alpha and beta subunits.

It localises to the plastid. Its subcellular location is the chloroplast thylakoid membrane. Light-harvesting photosynthetic tetrapyrrole chromophore-protein from the phycobiliprotein complex. This is Phycocyanin PC645 alpha-3 subunit from Chroomonas sp. (strain CCMP270).